A 563-amino-acid chain; its full sequence is Nigrin b (563 aa).

The first 25 residues, 1 to 25 (MRVVAAAMLYFYIVVLAICSVGIQG), serve as a signal peptide directing secretion. Glu188 is an active-site residue. The N-linked (GlcNAc...) asparagine glycan is linked to Asn221. Intrachain disulfides connect Cys274–Cys302, Cys319–Cys338, and Cys360–Cys377. 2 Ricin B-type lectin domains span residues 305–431 (RTSF…WTVT) and 434–559 (VKPI…WVTQ). A 1-alpha repeat occupies 316–356 (DGLCVDVRNGYDTDGTPLQLWPCGTQRNQRWTFDSDDTIRS). A 1-beta repeat occupies 357 to 397 (MGKCMTANGLNNGSNIVIFNCSTAAENAIKWEVPIDGSIIN). Asn368 and Asn376 each carry an N-linked (GlcNAc...) asparagine glycan. One copy of the 1-gamma repeat lies at 400–432 (SGLVMTAPRAASRTILLLEDNIYAASQGWTVTN). Residues 445–482 (KEMCLQSNGENNGVWMEDCEATSLQQQWALYGDRTIRV) form a 2-alpha repeat. The cysteines at positions 448 and 463 are disulfide-linked. N-linked (GlcNAc...) asparagine glycosylation occurs at Asn483. The stretch at 486–524 (RGLCVTTNGYNSKDLIIILKCQGLPSQRWFFNSDGAIVN) is one 2-beta repeat. A disulfide bond links Cys489 and Cys506. Residues 527 to 554 (SRHVMDVRASNVSLREIIIFPATGNPNQ) form a 2-gamma repeat. The N-linked (GlcNAc...) asparagine glycan is linked to Asn537.

This sequence in the N-terminal section; belongs to the ribosome-inactivating protein family. Type 2 RIP subfamily. As to quaternary structure, disulfide-linked dimer of A and B chains.

The enzyme catalyses Endohydrolysis of the N-glycosidic bond at one specific adenosine on the 28S rRNA.. Non-toxic type 2 RIP which strongly inhibits mammalian protein synthesis but does not affect plant nor bacterial protein synthesis. The A chain is responsible for inhibiting protein synthesis through the catalytic inactivation of 60S ribosomal subunits by removing adenine from position 4,324 of 28S rRNA. In terms of biological role, the B chain is a galactose-specific lectin that facilitates the binding of nigrin b to the cell membrane that precedes endocytosis. This chain is Nigrin b, found in Sambucus nigra (European elder).